The primary structure comprises 470 residues: A-type ATP synthase subunit B (470 aa).

The protein belongs to the ATPase alpha/beta chains family. Has multiple subunits with at least A(3), B(3), C, D, E, F, H, I and proteolipid K(x).

The protein resides in the cell membrane. Its function is as follows. Component of the A-type ATP synthase that produces ATP from ADP in the presence of a proton gradient across the membrane. The B chain is a regulatory subunit. The polypeptide is A-type ATP synthase subunit B (Haloarcula marismortui (strain ATCC 43049 / DSM 3752 / JCM 8966 / VKM B-1809) (Halobacterium marismortui)).